The primary structure comprises 501 residues: Tegument protein US24 (501 aa).

Belongs to the herpesviridae US22 family.

Its subcellular location is the virion tegument. The protein is Tegument protein US24 (US24) of Human cytomegalovirus (strain AD169) (HHV-5).